The primary structure comprises 313 residues: NADH-ubiquinone oxidoreductase chain 1 (313 aa).

The next 8 helical transmembrane spans lie at 2–22 (ILNF…IAFF), 71–91 (FIQI…WMIF), 103–123 (SIIF…FSGW), 138–158 (FAQV…LAII), 173–193 (TFPL…TVLA), 220–240 (WLFA…SFLT), 243–263 (LFLG…TMII), and 289–309 (SIIF…FICI).

Belongs to the complex I subunit 1 family.

The protein resides in the mitochondrion inner membrane. It carries out the reaction a ubiquinone + NADH + 5 H(+)(in) = a ubiquinol + NAD(+) + 4 H(+)(out). In terms of biological role, core subunit of the mitochondrial membrane respiratory chain NADH dehydrogenase (Complex I) that is believed to belong to the minimal assembly required for catalysis. Complex I functions in the transfer of electrons from NADH to the respiratory chain. The immediate electron acceptor for the enzyme is believed to be ubiquinone. This is NADH-ubiquinone oxidoreductase chain 1 (ND1) from Rhipicephalus sanguineus (Brown dog tick).